The following is an 82-amino-acid chain: Zinc finger CCCH domain-containing protein 13 (82 aa).

2 C3H1-type zinc fingers span residues 9-37 (RPGEPECSYYLRTGNCYLKQNCKYHHPKN) and 55-82 (RPGQAICPHYSRFGICRSGPTCKFDHFT).

The polypeptide is Zinc finger CCCH domain-containing protein 13 (Arabidopsis thaliana (Mouse-ear cress)).